The primary structure comprises 314 residues: Olfactory receptor 9I1 (314 aa).

Residues 1 to 25 lie on the Extracellular side of the membrane; the sequence is MAKNNLTRVTEFILMGFMDHPKLEI. The N-linked (GlcNAc...) asparagine glycan is linked to asparagine 5. The chain crosses the membrane as a helical span at residues 26 to 46; that stretch reads PLFLVFLSFYLVTLLGNVGMI. Residues 47-54 lie on the Cytoplasmic side of the membrane; that stretch reads MLIQVDVK. Residues 55-75 traverse the membrane as a helical segment; sequence LYTPMYFFLSHLSLLDACYTS. Over 76-99 the chain is Extracellular; that stretch reads VITPQILATLATGKTVISYGHCAA. Residues cysteine 97 and cysteine 189 are joined by a disulfide bond. Residues 100-120 form a helical membrane-spanning segment; it reads QFFLFTICAGTECFLLAVMAY. Over 121–139 the chain is Cytoplasmic; the sequence is DRYAAIRNPLLYTVAMNPR. Residues 140 to 160 form a helical membrane-spanning segment; that stretch reads LCWSLVVGAYVCGVSGAILRT. The Extracellular segment spans residues 161–197; it reads TCTFTLSFCKDNQINFFFCDLPPLLKLACSDTANIEI. Residues 198 to 217 traverse the membrane as a helical segment; sequence VIIFFGNFVILANASVILIS. Topologically, residues 218-237 are cytoplasmic; the sequence is YLLIIKTILKVKSSGGRAKT. A helical transmembrane segment spans residues 238–258; that stretch reads FSTCASHITAVALFFGALIFM. Residues 259-271 are Extracellular-facing; sequence YLQSGSGKSLEED. Residues 272-292 form a helical membrane-spanning segment; it reads KVVSVFYTVVIPMLNPLIYSL. Residues 293 to 314 lie on the Cytoplasmic side of the membrane; the sequence is RNKDVKDAFRKVARRLQVSLSM.

Belongs to the G-protein coupled receptor 1 family.

The protein resides in the cell membrane. Odorant receptor. The chain is Olfactory receptor 9I1 (OR9I1) from Homo sapiens (Human).